We begin with the raw amino-acid sequence, 187 residues long: MQIKTYKIKDICDIKRGRVISKLYIKNNPGEFPVYSSATVNNGEIGRIKDCDLKGEYVTWTTDGAQAGSVFYRNGQFNATNVCGILKVNNDEIYPKFLAYALRLKAPKFVNYACPIPKLMQGTLAEIELDFTSKKIQEKIATILDTFTELSAELSAELSAELSAELRERKKQYVFYSDYLLNPKNWK.

Belongs to the type-I restriction system S methylase family. As to quaternary structure, the methyltransferase is composed of M and S polypeptides.

The N-terminal section of a specificity (S) subunit of a type I methyltransferase (MTase); this subunit dictates DNA sequence specificity. The single R subunit has multiple frameshifts and is probably not expressed. In Mycoplasma pneumoniae (strain ATCC 29342 / M129 / Subtype 1) (Mycoplasmoides pneumoniae), this protein is Putative type I specificity subunit S.MpnORF289P N-terminus.